A 336-amino-acid polypeptide reads, in one-letter code: Probable tRNA N6-adenosine threonylcarbamoyltransferase (336 aa).

Residues histidine 110, histidine 114, and tyrosine 131 each contribute to the a divalent metal cation site. Substrate contacts are provided by residues 131–135, aspartate 163, glycine 178, glutamate 182, and asparagine 267; that span reads YVSGG. Position 295 (aspartate 295) interacts with a divalent metal cation.

The protein belongs to the KAE1 / TsaD family. As to quaternary structure, component of the EKC/KEOPS complex; the whole complex dimerizes. A divalent metal cation serves as cofactor.

The protein resides in the cytoplasm. It is found in the nucleus. The enzyme catalyses L-threonylcarbamoyladenylate + adenosine(37) in tRNA = N(6)-L-threonylcarbamoyladenosine(37) in tRNA + AMP + H(+). Component of the EKC/KEOPS complex that is required for the formation of a threonylcarbamoyl group on adenosine at position 37 (t(6)A37) in tRNAs that read codons beginning with adenine. The complex is probably involved in the transfer of the threonylcarbamoyl moiety of threonylcarbamoyl-AMP (TC-AMP) to the N6 group of A37. Osgep likely plays a direct catalytic role in this reaction, but requires other protein(s) of the complex to fulfill this activity. The sequence is that of Probable tRNA N6-adenosine threonylcarbamoyltransferase from Dictyostelium discoideum (Social amoeba).